A 1035-amino-acid chain; its full sequence is Beta-galactosidase (1035 aa).

Residues Asn101 and Asp199 each contribute to the substrate site. Asp199 contacts Na(+). 3 residues coordinate Mg(2+): Glu415, His417, and Glu460. Residues Glu460 and 540–543 (EYAH) each bind substrate. The active-site Proton donor is Glu460. Glu540 acts as the Nucleophile in catalysis. Asn600 contacts Mg(2+). Na(+) is bound by residues Phe604 and Asn607. The substrate site is built by Asn607 and Trp1011.

It belongs to the glycosyl hydrolase 2 family. In terms of assembly, homotetramer. Mg(2+) serves as cofactor. Requires Na(+) as cofactor.

The catalysed reaction is Hydrolysis of terminal non-reducing beta-D-galactose residues in beta-D-galactosides.. The polypeptide is Beta-galactosidase (Psychromonas ingrahamii (strain DSM 17664 / CCUG 51855 / 37)).